A 184-amino-acid polypeptide reads, in one-letter code: Large ribosomal subunit protein uL18 (184 aa).

The protein belongs to the universal ribosomal protein uL18 family. As to quaternary structure, part of the 50S ribosomal subunit. Contacts the 5S and 23S rRNAs.

Its function is as follows. This is one of the proteins that bind and probably mediate the attachment of the 5S RNA into the large ribosomal subunit, where it forms part of the central protuberance. The protein is Large ribosomal subunit protein uL18 of Haloferax mediterranei (strain ATCC 33500 / DSM 1411 / JCM 8866 / NBRC 14739 / NCIMB 2177 / R-4) (Halobacterium mediterranei).